Here is an 877-residue protein sequence, read N- to C-terminus: Leucine--tRNA ligase (877 aa).

The 'HIGH' region motif lies at 43-53; that stretch reads PYPSGRIHMGH. A 'KMSKS' region motif is present at residues 628–632; the sequence is KMSKS. K631 serves as a coordination point for ATP.

It belongs to the class-I aminoacyl-tRNA synthetase family.

The protein resides in the cytoplasm. It catalyses the reaction tRNA(Leu) + L-leucine + ATP = L-leucyl-tRNA(Leu) + AMP + diphosphate. The chain is Leucine--tRNA ligase from Brucella abortus biovar 1 (strain 9-941).